The following is a 152-amino-acid chain: Xanthine-guanine phosphoribosyltransferase (152 aa).

Residues 37–38 (RG) and 88–96 (DDLVDTGNT) contribute to the 5-phospho-alpha-D-ribose 1-diphosphate site. A Mg(2+)-binding site is contributed by Asp89. Asp92 and Ile135 together coordinate guanine. Xanthine is bound by residues Asp92 and Ile135. GMP is bound by residues 92–96 (DTGNT) and 134–135 (WI).

This sequence belongs to the purine/pyrimidine phosphoribosyltransferase family. XGPT subfamily. Homotetramer. The cofactor is Mg(2+).

The protein localises to the cell inner membrane. The enzyme catalyses GMP + diphosphate = guanine + 5-phospho-alpha-D-ribose 1-diphosphate. The catalysed reaction is XMP + diphosphate = xanthine + 5-phospho-alpha-D-ribose 1-diphosphate. It catalyses the reaction IMP + diphosphate = hypoxanthine + 5-phospho-alpha-D-ribose 1-diphosphate. It functions in the pathway purine metabolism; GMP biosynthesis via salvage pathway; GMP from guanine: step 1/1. The protein operates within purine metabolism; XMP biosynthesis via salvage pathway; XMP from xanthine: step 1/1. Functionally, purine salvage pathway enzyme that catalyzes the transfer of the ribosyl-5-phosphate group from 5-phospho-alpha-D-ribose 1-diphosphate (PRPP) to the N9 position of the 6-oxopurines guanine and xanthine to form the corresponding ribonucleotides GMP (guanosine 5'-monophosphate) and XMP (xanthosine 5'-monophosphate), with the release of PPi. To a lesser extent, also acts on hypoxanthine. In Mannheimia succiniciproducens (strain KCTC 0769BP / MBEL55E), this protein is Xanthine-guanine phosphoribosyltransferase.